The following is a 1213-amino-acid chain: DNA-directed RNA polymerase subunit beta' (1213 aa).

The Zn(2+) site is built by Cys-60, Cys-62, Cys-75, and Cys-78. Residues Asp-450, Asp-452, and Asp-454 each contribute to the Mg(2+) site. Zn(2+) is bound by residues Cys-819, Cys-893, Cys-900, and Cys-903.

The protein belongs to the RNA polymerase beta' chain family. The RNAP catalytic core consists of 2 alpha, 1 beta, 1 beta' and 1 omega subunit. When a sigma factor is associated with the core the holoenzyme is formed, which can initiate transcription. The cofactor is Mg(2+). It depends on Zn(2+) as a cofactor.

It catalyses the reaction RNA(n) + a ribonucleoside 5'-triphosphate = RNA(n+1) + diphosphate. Functionally, DNA-dependent RNA polymerase catalyzes the transcription of DNA into RNA using the four ribonucleoside triphosphates as substrates. This is DNA-directed RNA polymerase subunit beta' from Streptococcus pyogenes serotype M2 (strain MGAS10270).